The sequence spans 482 residues: tRNA sulfurtransferase (482 aa).

Residues 61–165 form the THUMP domain; that stretch reads LAIRDALTRI…DDRLLLIKGR (105 aa). Residues 183–184, lysine 265, glycine 287, and glutamine 296 each bind ATP; that span reads LI. Cysteine 344 and cysteine 456 are oxidised to a cystine. The region spanning 404–482 is the Rhodanese domain; sequence FGPNDVILDI…GFNNVKVYRP (79 aa). Residue cysteine 456 is the Cysteine persulfide intermediate of the active site.

This sequence belongs to the ThiI family.

The protein resides in the cytoplasm. It carries out the reaction [ThiI sulfur-carrier protein]-S-sulfanyl-L-cysteine + a uridine in tRNA + 2 reduced [2Fe-2S]-[ferredoxin] + ATP + H(+) = [ThiI sulfur-carrier protein]-L-cysteine + a 4-thiouridine in tRNA + 2 oxidized [2Fe-2S]-[ferredoxin] + AMP + diphosphate. The enzyme catalyses [ThiS sulfur-carrier protein]-C-terminal Gly-Gly-AMP + S-sulfanyl-L-cysteinyl-[cysteine desulfurase] + AH2 = [ThiS sulfur-carrier protein]-C-terminal-Gly-aminoethanethioate + L-cysteinyl-[cysteine desulfurase] + A + AMP + 2 H(+). The protein operates within cofactor biosynthesis; thiamine diphosphate biosynthesis. Functionally, catalyzes the ATP-dependent transfer of a sulfur to tRNA to produce 4-thiouridine in position 8 of tRNAs, which functions as a near-UV photosensor. Also catalyzes the transfer of sulfur to the sulfur carrier protein ThiS, forming ThiS-thiocarboxylate. This is a step in the synthesis of thiazole, in the thiamine biosynthesis pathway. The sulfur is donated as persulfide by IscS. The protein is tRNA sulfurtransferase of Escherichia coli (strain K12 / MC4100 / BW2952).